A 416-amino-acid chain; its full sequence is MKAKSMKSIISVPISVSKTGKMKLTASPDNLASMMSKDQNKLIHLDPVPSFEDRHEIKPWLQKIFYPQGIDIVIERSDSSKVTFKCRSVRSKVGLNPKSKGSSSRSHACPFRIRAAYSVRLQKWNVVVMNNIHSHELRFDLITKTDDYKKFKENLRQKNDEKAIKTFDELEYKASLNLPLVTPIISCDCGLTKEIEAFNNIFLPLSNPPLTSKKNLLKTNKNSVSKIKSRQMDNSKPRPRLKTKLDADLHDTGFLDNFKTRNSCVKIEKEDSLTNLNEIDFTNMFCNDNFIQNYNQGLMELLTEPTPGPSSSSCILPSTPTRPLSQSKMDIALSESTTSSPNFMETDAPYGDEIIKVSKDTKSNAPTADTDIATNLGKERNENFGMLNYNYEALLHFNDEHFNELNSIDPALISKY.

Asp-53 contributes to the Zn(2+) binding site. Arg-54, His-55, Lys-58, Ile-74, Glu-75, Arg-76, Ser-77, Asp-78, and Lys-81 together coordinate DNA. A Zn(2+)-binding site is contributed by His-55. Cys-86 lines the Zn(2+) pocket. Ser-88 serves as a coordination point for DNA. Residue Cys-109 coordinates Zn(2+). Residues Val-119 and Arg-120 each contribute to the DNA site. The Zn(2+) site is built by His-133 and His-135. DNA contacts are provided by Gln-157 and Asn-159. Residues 187 to 189 (CDC) carry the CDC [2Fe-2S] cluster binding motif motif.

In terms of assembly, homodimer. Dimerization decreases the DNA-binding activity.

It is found in the nucleus. With respect to regulation, dimerization via the binding of Fe(2+) or a [2Fe-2S] cluster decreases the DNA-binding activity. Its function is as follows. Transcription factor required for iron homeostasis and resistance to oxidative stress. With AFT1, activates the gene expression in response to low-iron conditions, also called iron regulon. Recognizes the consensus iron-responsive element (Fe-RE) sequence 5'-CACCC-3' in the promoters of target genes. The transcription activation by AFT1 and AFT2 depends on the mitochondrial iron-sulfur protein biosynthesis pathway. In high iron condition, the presence of iron leads to dimerization, which in turn leads to a decrease in DNA affinity. The protein is Iron-regulated transcriptional activator AFT2 of Saccharomyces cerevisiae (strain ATCC 204508 / S288c) (Baker's yeast).